Reading from the N-terminus, the 103-residue chain is Large ribosomal subunit protein bL21 (103 aa).

The protein belongs to the bacterial ribosomal protein bL21 family. Part of the 50S ribosomal subunit. Contacts protein L20.

In terms of biological role, this protein binds to 23S rRNA in the presence of protein L20. In Cupriavidus pinatubonensis (strain JMP 134 / LMG 1197) (Cupriavidus necator (strain JMP 134)), this protein is Large ribosomal subunit protein bL21.